The chain runs to 492 residues: Bifunctional purine biosynthesis protein PurH (492 aa).

An MGS-like domain is found at 1-144 (MKKAILSVSN…KNYKHVTTIV (144 aa)).

Belongs to the PurH family.

The enzyme catalyses (6R)-10-formyltetrahydrofolate + 5-amino-1-(5-phospho-beta-D-ribosyl)imidazole-4-carboxamide = 5-formamido-1-(5-phospho-D-ribosyl)imidazole-4-carboxamide + (6S)-5,6,7,8-tetrahydrofolate. It catalyses the reaction IMP + H2O = 5-formamido-1-(5-phospho-D-ribosyl)imidazole-4-carboxamide. It functions in the pathway purine metabolism; IMP biosynthesis via de novo pathway; 5-formamido-1-(5-phospho-D-ribosyl)imidazole-4-carboxamide from 5-amino-1-(5-phospho-D-ribosyl)imidazole-4-carboxamide (10-formyl THF route): step 1/1. It participates in purine metabolism; IMP biosynthesis via de novo pathway; IMP from 5-formamido-1-(5-phospho-D-ribosyl)imidazole-4-carboxamide: step 1/1. The polypeptide is Bifunctional purine biosynthesis protein PurH (Staphylococcus aureus (strain MRSA252)).